A 220-amino-acid chain; its full sequence is Thiopurine S-methyltransferase (220 aa).

The S-adenosyl-L-methionine site is built by Trp10, Leu45, Glu66, and Arg123.

The protein belongs to the class I-like SAM-binding methyltransferase superfamily. TPMT family.

Its subcellular location is the cytoplasm. It catalyses the reaction S-adenosyl-L-methionine + a thiopurine = S-adenosyl-L-homocysteine + a thiopurine S-methylether.. This Nitrosomonas eutropha (strain DSM 101675 / C91 / Nm57) protein is Thiopurine S-methyltransferase.